A 48-amino-acid polypeptide reads, in one-letter code: Delta-stichotoxin-Hmg4b (48 aa).

3 disulfides stabilise this stretch: cysteine 3-cysteine 43, cysteine 5-cysteine 33, and cysteine 26-cysteine 44.

Belongs to the sea anemone sodium channel inhibitory toxin family. Type II subfamily.

Its subcellular location is the secreted. It is found in the nematocyst. In terms of biological role, binds specifically to voltage-gated sodium channels (Nav), thereby delaying their inactivation during signal transduction. Its toxicity is greater than that of RpII (AC P01534). The chain is Delta-stichotoxin-Hmg4b from Heteractis magnifica (Magnificent sea anemone).